The primary structure comprises 322 residues: NADH-quinone oxidoreductase subunit H (322 aa).

Helical transmembrane passes span 12-32 (VGKA…MSFI), 79-99 (IFIL…AVVP), 111-131 (VGLL…LFAG), 151-171 (LSYE…TGSF), 183-203 (LWNV…GVAV), 234-254 (FFVG…TLFF), 262-282 (LPPF…FILL), and 301-321 (VCLP…LINV).

Belongs to the complex I subunit 1 family. NDH-1 is composed of 14 different subunits. Subunits NuoA, H, J, K, L, M, N constitute the membrane sector of the complex.

It localises to the cell inner membrane. The catalysed reaction is a quinone + NADH + 5 H(+)(in) = a quinol + NAD(+) + 4 H(+)(out). Functionally, NDH-1 shuttles electrons from NADH, via FMN and iron-sulfur (Fe-S) centers, to quinones in the respiratory chain. The immediate electron acceptor for the enzyme in this species is believed to be ubiquinone. Couples the redox reaction to proton translocation (for every two electrons transferred, four hydrogen ions are translocated across the cytoplasmic membrane), and thus conserves the redox energy in a proton gradient. This subunit may bind ubiquinone. The polypeptide is NADH-quinone oxidoreductase subunit H (Aeromonas salmonicida (strain A449)).